The primary structure comprises 203 residues: uncharacterized protein (203 aa).

This is an uncharacterized protein from Haemophilus influenzae (strain ATCC 51907 / DSM 11121 / KW20 / Rd).